The chain runs to 152 residues: MNFEGKLVGSDLKVAIVVSRFNDFITNRLLDGAKDTLIRHEVPEANIDVAYVPGAFEIPLVAKKLAKKNDYDAVITLGCVIRGSTSHYDYVCNEVAKGVSKANDVTDTPVIFGILTTENIEQAVERAGTKAGNKGAEAAVSAIEMANLLREI.

5-amino-6-(D-ribitylamino)uracil is bound by residues F21, 55 to 57, and 79 to 81; these read AFE and CVI. 84–85 is a binding site for (2S)-2-hydroxy-3-oxobutyl phosphate; it reads ST. The active-site Proton donor is the H87. 5-amino-6-(D-ribitylamino)uracil is bound at residue F112. R126 serves as a coordination point for (2S)-2-hydroxy-3-oxobutyl phosphate.

It belongs to the DMRL synthase family. Forms an icosahedral capsid composed of 60 subunits, arranged as a dodecamer of pentamers.

It carries out the reaction (2S)-2-hydroxy-3-oxobutyl phosphate + 5-amino-6-(D-ribitylamino)uracil = 6,7-dimethyl-8-(1-D-ribityl)lumazine + phosphate + 2 H2O + H(+). Its pathway is cofactor biosynthesis; riboflavin biosynthesis; riboflavin from 2-hydroxy-3-oxobutyl phosphate and 5-amino-6-(D-ribitylamino)uracil: step 1/2. Its function is as follows. Catalyzes the formation of 6,7-dimethyl-8-ribityllumazine by condensation of 5-amino-6-(D-ribitylamino)uracil with 3,4-dihydroxy-2-butanone 4-phosphate. This is the penultimate step in the biosynthesis of riboflavin. This is 6,7-dimethyl-8-ribityllumazine synthase from Staphylococcus saprophyticus subsp. saprophyticus (strain ATCC 15305 / DSM 20229 / NCIMB 8711 / NCTC 7292 / S-41).